The sequence spans 369 residues: Anhydro-N-acetylmuramic acid kinase (369 aa).

12–19 is a binding site for ATP; that stretch reads GTSLDGVD.

The protein belongs to the anhydro-N-acetylmuramic acid kinase family.

It carries out the reaction 1,6-anhydro-N-acetyl-beta-muramate + ATP + H2O = N-acetyl-D-muramate 6-phosphate + ADP + H(+). It functions in the pathway amino-sugar metabolism; 1,6-anhydro-N-acetylmuramate degradation. It participates in cell wall biogenesis; peptidoglycan recycling. Functionally, catalyzes the specific phosphorylation of 1,6-anhydro-N-acetylmuramic acid (anhMurNAc) with the simultaneous cleavage of the 1,6-anhydro ring, generating MurNAc-6-P. Is required for the utilization of anhMurNAc either imported from the medium or derived from its own cell wall murein, and thus plays a role in cell wall recycling. The sequence is that of Anhydro-N-acetylmuramic acid kinase from Shigella boydii serotype 18 (strain CDC 3083-94 / BS512).